The following is a 672-amino-acid chain: MSKEERPGREEILECQVMWEPDSKKNTQMDRFRAAVGAACGLALENYDDLYRWSVESYSDFWAEFWKFSGIVFSRAYDEVVDTSKGIADVPEWFKGSRLNYAENLLRHKENDRVALYVAREGKEEIVKVTFEELRQEVALFAAAMRKMGVKKGDRVVGYLPNSEHAVEAMLAAASIGAIWSSTSPDFGVNGVLDRFSQIQPKLIFSVEAVVYNGKEHSHMEKLQQVVKGLPDLKKVVVIPYVSSREKIDLSKIPNSVFLDDFLATGTSEQAPQLEFEQLPFSHPLFIMFSSGTTGAPKCMVHSAGGTLIQHLKEHLLHGNMTSSDILLCYTTAGWMMWNWMVSILATGAAMVLYDGSPLVPTPNVLWDLVDRIGITVLVTGAKWLSVLEEKAMKPVETHSLQMLHTILSTGSPLKAQSYEYVYRCIKSSILLGSISGGTDIISCFMGHNFSLPVYKGEIQARNLGMAVEAWNEEGKAVWGESGELVCTKPIPCQPTHFWNDENGSKYRKAYFSKFPGIWAHGDYCRINPKTGGIIMLGRSDGTLNPNGVRFGSSEIYNIVESFEEVEDSLCVPQYNKFREERVILFLKMASGHAFQPDLVKRIRDAIRVGLSARHVPSLILETKGIPYTLNGKKVEVAVKQIIAGKAVEQGGAFSNPETLDLYRDIPELQGF.

It belongs to the ATP-dependent AMP-binding enzyme family.

The protein localises to the cytoplasm. Its subcellular location is the cytosol. The enzyme catalyses acetoacetate + ATP + CoA = acetoacetyl-CoA + AMP + diphosphate. Its function is as follows. Converts acetoacetate to acetoacetyl-CoA in the cytosol. Ketone body-utilizing enzyme, responsible for the synthesis of cholesterol and fatty acids. The sequence is that of Acetoacetyl-CoA synthetase (AACS) from Macaca fascicularis (Crab-eating macaque).